A 185-amino-acid chain; its full sequence is UPF0149 protein PFL_5969 (185 aa).

The protein belongs to the UPF0149 family.

The chain is UPF0149 protein PFL_5969 from Pseudomonas fluorescens (strain ATCC BAA-477 / NRRL B-23932 / Pf-5).